A 532-amino-acid chain; its full sequence is Bifunctional purine biosynthesis protein PurH (532 aa).

An MGS-like domain is found at 1-148 (MQTPKPIKRA…KNHKDVTIVV (148 aa)).

This sequence belongs to the PurH family.

It catalyses the reaction (6R)-10-formyltetrahydrofolate + 5-amino-1-(5-phospho-beta-D-ribosyl)imidazole-4-carboxamide = 5-formamido-1-(5-phospho-D-ribosyl)imidazole-4-carboxamide + (6S)-5,6,7,8-tetrahydrofolate. The catalysed reaction is IMP + H2O = 5-formamido-1-(5-phospho-D-ribosyl)imidazole-4-carboxamide. It participates in purine metabolism; IMP biosynthesis via de novo pathway; 5-formamido-1-(5-phospho-D-ribosyl)imidazole-4-carboxamide from 5-amino-1-(5-phospho-D-ribosyl)imidazole-4-carboxamide (10-formyl THF route): step 1/1. The protein operates within purine metabolism; IMP biosynthesis via de novo pathway; IMP from 5-formamido-1-(5-phospho-D-ribosyl)imidazole-4-carboxamide: step 1/1. The protein is Bifunctional purine biosynthesis protein PurH of Alteromonas mediterranea (strain DSM 17117 / CIP 110805 / LMG 28347 / Deep ecotype).